A 323-amino-acid polypeptide reads, in one-letter code: Ferrochelatase (323 aa).

Residues H196 and E277 each coordinate Fe cation.

Belongs to the ferrochelatase family.

It is found in the cytoplasm. The enzyme catalyses heme b + 2 H(+) = protoporphyrin IX + Fe(2+). It functions in the pathway porphyrin-containing compound metabolism; protoheme biosynthesis; protoheme from protoporphyrin-IX: step 1/1. Functionally, catalyzes the ferrous insertion into protoporphyrin IX. The sequence is that of Ferrochelatase from Haemophilus influenzae (strain PittEE).